We begin with the raw amino-acid sequence, 366 residues long: Peptide chain release factor 2 (366 aa).

Residue Gln251 is modified to N5-methylglutamine.

Belongs to the prokaryotic/mitochondrial release factor family. Methylated by PrmC. Methylation increases the termination efficiency of RF2.

It is found in the cytoplasm. Peptide chain release factor 2 directs the termination of translation in response to the peptide chain termination codons UGA and UAA. This chain is Peptide chain release factor 2 (prfB), found in Listeria monocytogenes serotype 4b (strain F2365).